The sequence spans 339 residues: UDP-3-O-acylglucosamine N-acyltransferase (339 aa).

His248 functions as the Proton acceptor in the catalytic mechanism.

It belongs to the transferase hexapeptide repeat family. LpxD subfamily. As to quaternary structure, homotrimer.

It catalyses the reaction a UDP-3-O-[(3R)-3-hydroxyacyl]-alpha-D-glucosamine + a (3R)-hydroxyacyl-[ACP] = a UDP-2-N,3-O-bis[(3R)-3-hydroxyacyl]-alpha-D-glucosamine + holo-[ACP] + H(+). Its pathway is bacterial outer membrane biogenesis; LPS lipid A biosynthesis. Its function is as follows. Catalyzes the N-acylation of UDP-3-O-acylglucosamine using 3-hydroxyacyl-ACP as the acyl donor. Is involved in the biosynthesis of lipid A, a phosphorylated glycolipid that anchors the lipopolysaccharide to the outer membrane of the cell. The sequence is that of UDP-3-O-acylglucosamine N-acyltransferase from Caulobacter vibrioides (strain NA1000 / CB15N) (Caulobacter crescentus).